Here is a 429-residue protein sequence, read N- to C-terminus: Glutamate-1-semialdehyde 2,1-aminomutase (429 aa).

Residue Lys267 is modified to N6-(pyridoxal phosphate)lysine.

The protein belongs to the class-III pyridoxal-phosphate-dependent aminotransferase family. HemL subfamily. Homodimer. Requires pyridoxal 5'-phosphate as cofactor.

The protein localises to the cytoplasm. The enzyme catalyses (S)-4-amino-5-oxopentanoate = 5-aminolevulinate. It functions in the pathway porphyrin-containing compound metabolism; protoporphyrin-IX biosynthesis; 5-aminolevulinate from L-glutamyl-tRNA(Glu): step 2/2. The protein is Glutamate-1-semialdehyde 2,1-aminomutase of Herpetosiphon aurantiacus (strain ATCC 23779 / DSM 785 / 114-95).